A 134-amino-acid polypeptide reads, in one-letter code: Putative transposase InsN for insertion sequence element IS911A (134 aa).

The protein belongs to the transposase 8 family.

In terms of biological role, involved in the transposition of the insertion sequence IS911. This is Putative transposase InsN for insertion sequence element IS911A (insN1) from Escherichia coli (strain K12).